Reading from the N-terminus, the 578-residue chain is Ketol-acid reductoisomerase, chloroplastic (578 aa).

Residues 1-52 (MAASTTLALSHPKTLAAAAAAAPKAPTAPAAVSFPVSHAACAPLAARRRAVT) constitute a chloroplast transit peptide. A KARI N-terminal Rossmann domain is found at 90 to 288 (VRGGRNLFPL…ALGSPFTFAT (199 aa)). NADP(+) is bound by residues 111-118 (GVIGWGSQ), 144-149 (RKGSKS), and 183-187 (SDAAQ). The active site involves histidine 208. 2 KARI C-terminal knotted domains span residues 289–437 (TLEQ…RPEN) and 438–574 (DLGP…RPEL). Residues aspartate 297, glutamate 301, glutamate 474, and glutamate 478 each coordinate Mg(2+). Serine 500 is a substrate binding site.

This sequence belongs to the ketol-acid reductoisomerase family. In terms of assembly, homodimer. Requires Mg(2+) as cofactor.

It is found in the plastid. It localises to the chloroplast. The enzyme catalyses (2R)-2,3-dihydroxy-3-methylbutanoate + NADP(+) = (2S)-2-acetolactate + NADPH + H(+). It catalyses the reaction (2R,3R)-2,3-dihydroxy-3-methylpentanoate + NADP(+) = (S)-2-ethyl-2-hydroxy-3-oxobutanoate + NADPH + H(+). It functions in the pathway amino-acid biosynthesis; L-isoleucine biosynthesis; L-isoleucine from 2-oxobutanoate: step 2/4. It participates in amino-acid biosynthesis; L-valine biosynthesis; L-valine from pyruvate: step 2/4. The sequence is that of Ketol-acid reductoisomerase, chloroplastic from Oryza sativa subsp. japonica (Rice).